We begin with the raw amino-acid sequence, 181 residues long: GMP synthase [glutamine-hydrolyzing] subunit A (181 aa).

A Glutamine amidotransferase type-1 domain is found at 2–181 (KILVVNNYGQ…FDNFLEICRR (180 aa)). Cysteine 72 acts as the Nucleophile in catalysis. Residues histidine 159 and glutamate 161 contribute to the active site.

In terms of assembly, heterodimer composed of a glutamine amidotransferase subunit (A) and a GMP-binding subunit (B).

It carries out the reaction XMP + L-glutamine + ATP + H2O = GMP + L-glutamate + AMP + diphosphate + 2 H(+). The protein operates within purine metabolism; GMP biosynthesis; GMP from XMP (L-Gln route): step 1/1. In terms of biological role, catalyzes the synthesis of GMP from XMP. The sequence is that of GMP synthase [glutamine-hydrolyzing] subunit A from Methanothrix thermoacetophila (strain DSM 6194 / JCM 14653 / NBRC 101360 / PT) (Methanosaeta thermophila).